The chain runs to 396 residues: DNA polymerase interacting tetratricopeptide repeat-containing, protein of 47 kDa (396 aa).

TPR repeat units lie at residues 91–124 (ALNYKEDGNFYMKHKKFRMAIYSFTEGIKTKTDN), 129–162 (AVLYNNRSAAHFFIKNYRSSLSDAQRALFYKPDY), and 163–196 (TKARWRSAQCAYELERFDLCTQMCEELLEVDVDN).

It belongs to the TTC4 family. Forms a complex with Hsp83 and Hsp70aa. Interacts with DNApol-alpha180; the interaction inhibits the activity of the DNA polymerase and occurs only in proliferating cells but not in quiescent cells. In terms of tissue distribution, more abundant in young embryos, pupae and females and a lower level expression seen in late embryos, larvae and males.

Its subcellular location is the nucleus. It is found in the nucleoplasm. The protein localises to the cytoplasm. Its function is as follows. May act as a co-chaperone for HSP83. The polypeptide is DNA polymerase interacting tetratricopeptide repeat-containing, protein of 47 kDa (Dpit47) (Drosophila melanogaster (Fruit fly)).